A 251-amino-acid chain; its full sequence is Ribosomal RNA small subunit methyltransferase J (251 aa).

Residues Arg100 to Asp101, Glu116 to Arg117, and Asp170 contribute to the S-adenosyl-L-methionine site.

Belongs to the methyltransferase superfamily. RsmJ family.

The protein localises to the cytoplasm. It catalyses the reaction guanosine(1516) in 16S rRNA + S-adenosyl-L-methionine = N(2)-methylguanosine(1516) in 16S rRNA + S-adenosyl-L-homocysteine + H(+). Specifically methylates the guanosine in position 1516 of 16S rRNA. This is Ribosomal RNA small subunit methyltransferase J from Actinobacillus pleuropneumoniae serotype 3 (strain JL03).